Reading from the N-terminus, the 504-residue chain is Sodium-coupled neutral amino acid transporter 3 (504 aa).

Residue Ser-52 is modified to Phosphoserine; by PKC. Asn-73 is a glycosylation site (N-linked (GlcNAc...) asparagine). Transmembrane regions (helical) follow at residues 82 to 102 (GILG…LFLL), 105 to 125 (VALL…IVGI), 143 to 163 (AAAL…LYII), 186 to 206 (MDGN…LALM), and 212 to 232 (LGYS…AVIY). Cys-239 and Cys-275 are oxidised to a cystine. 2 N-linked (GlcNAc...) asparagine glycosylation sites follow: Asn-247 and Asn-251. A helical membrane pass occupies residues 287–307 (AYTIPIMAFAFVCHPEVLPIY). N-linked (GlcNAc...) asparagine glycosylation occurs at Asn-323. The next 5 membrane-spanning stretches (helical) occupy residues 324-344 (LSIA…YLTF), 366-386 (ILCV…IVLF), 408-428 (VLIA…APNI), 431-451 (IFGI…PAIF), and 469-489 (ILAL…LSFI).

The protein belongs to the amino acid/polyamine transporter 2 family. Phosphorylation at Ser-52 induces internalization and sequestration into an intracellular reservoir. During dephosphorylation by protein phosphatases, can recycle back to the plasma membrane and regain activity. Prolonged phosphorylation results in its degradation. As to expression, highly expressed in liver. Expressed in skeletal muscle. Expressed in kidney, heart and brain. Not detected in gut, lung or spleen. Expressed ubiquitously in hepatocytes in liver whereas in kidney expression is restricted to the medulla. Within brain, expressed in glial cells. In the cerebellum, expressed on Bergmann glial fibers in the molecular layer and astrocytes in the granule layer. Expressed in brain kidney and liver (at protein level). In the adult kidney, highly expressed in the outer strip of the outer medulla and medullary rays penetrating into the kidney cortex (at protein level).

It localises to the cell membrane. It is found in the basolateral cell membrane. The catalysed reaction is L-glutamine(out) + Na(+)(out) + H(+)(in) = L-glutamine(in) + Na(+)(in) + H(+)(out). The enzyme catalyses L-asparagine(out) + Na(+)(out) + H(+)(in) = L-asparagine(in) + Na(+)(in) + H(+)(out). It catalyses the reaction L-histidine(out) + Na(+)(out) + H(+)(in) = L-histidine(in) + Na(+)(in) + H(+)(out). With respect to regulation, L-glutamine efflux and L-glutamine uptake are regulated by CO2/HCO3(-) through SLC4A4 leading to modulation of cytosolic pH and Na(+)concentration. Its function is as follows. Symporter that cotransports specific neutral amino acids and sodium ions, coupled to an H(+) antiporter activity. Mainly participates in the glutamate-GABA-glutamine cycle in brain where it transports L-glutamine from astrocytes in the intercellular space for the replenishment of both neurotransmitters glutamate and gamma-aminobutyric acid (GABA) in neurons. Also functions as the major influx transporter in ganglion cells mediating the uptake of glutamine. The transport activity is specific for L-glutamine, L-histidine and L-asparagine. The transport is electroneutral coupled to the cotransport of 1 Na(+) and the antiport of 1 H(+), pH dependent, saturable, Li(+) tolerant and functions in both direction depending on the concentration gradients of its substrates and cotransported ions. Also mediates an amino acid-gated H(+) conductance that is not stoichiometrically coupled to the amino acid transport but which influences the ionic gradients that drive the amino acid transport. In addition, may play a role in nitrogen metabolism, amino acid homeostasis, glucose metabolism and renal ammoniagenesis. The chain is Sodium-coupled neutral amino acid transporter 3 from Rattus norvegicus (Rat).